The primary structure comprises 815 residues: Phenylalanine--tRNA ligase beta subunit (815 aa).

In terms of domain architecture, tRNA-binding spans 39-153; sequence ASHAQGVVVG…NVPDLGQPVG (115 aa). The B5 domain maps to 414-498; it reads KSAEPVKLRR…RLVGFDRFEA (85 aa). Residues Asp476, Asp482, Glu485, and Glu486 each coordinate Mg(2+). The FDX-ACB domain occupies 721–814; it reads PTVPAMELDL…LVKQFSAELR (94 aa).

The protein belongs to the phenylalanyl-tRNA synthetase beta subunit family. Type 1 subfamily. In terms of assembly, tetramer of two alpha and two beta subunits. Mg(2+) is required as a cofactor.

The protein resides in the cytoplasm. It catalyses the reaction tRNA(Phe) + L-phenylalanine + ATP = L-phenylalanyl-tRNA(Phe) + AMP + diphosphate + H(+). The protein is Phenylalanine--tRNA ligase beta subunit of Prochlorococcus marinus (strain MIT 9313).